A 475-amino-acid polypeptide reads, in one-letter code: Aspartyl/glutamyl-tRNA(Asn/Gln) amidotransferase subunit B (475 aa).

The protein belongs to the GatB/GatE family. GatB subfamily. In terms of assembly, heterotrimer of A, B and C subunits.

The catalysed reaction is L-glutamyl-tRNA(Gln) + L-glutamine + ATP + H2O = L-glutaminyl-tRNA(Gln) + L-glutamate + ADP + phosphate + H(+). It catalyses the reaction L-aspartyl-tRNA(Asn) + L-glutamine + ATP + H2O = L-asparaginyl-tRNA(Asn) + L-glutamate + ADP + phosphate + 2 H(+). Its function is as follows. Allows the formation of correctly charged Asn-tRNA(Asn) or Gln-tRNA(Gln) through the transamidation of misacylated Asp-tRNA(Asn) or Glu-tRNA(Gln) in organisms which lack either or both of asparaginyl-tRNA or glutaminyl-tRNA synthetases. The reaction takes place in the presence of glutamine and ATP through an activated phospho-Asp-tRNA(Asn) or phospho-Glu-tRNA(Gln). This Lysinibacillus sphaericus (strain C3-41) protein is Aspartyl/glutamyl-tRNA(Asn/Gln) amidotransferase subunit B.